The following is a 329-amino-acid chain: Protein-arginine N-acetylglucosaminyltransferase NleB1 (329 aa).

Arginine 13 carries an N-beta-linked (GlcNAc) arginine; by autocatalysis glycan. Residue 48–50 coordinates UDP-N-acetyl-alpha-D-glucosamine; that stretch reads QWF. Arginine 53 carries an N-beta-linked (GlcNAc) arginine; by autocatalysis glycan. Tyrosine 72 is a UDP-N-acetyl-alpha-D-glucosamine binding site. N-beta-linked (GlcNAc) arginine; by autocatalysis glycosylation is present at arginine 159. A UDP-N-acetyl-alpha-D-glucosamine-binding site is contributed by 219–222; the sequence is YLDA. The short motif at 221–223 is the DXD motif element; sequence DAD. Mn(2+) is bound at residue aspartate 223. Catalysis depends on glutamate 253, which acts as the Proton acceptor. A glycan (N-beta-linked (GlcNAc) arginine; by autocatalysis) is linked at arginine 293. The Mn(2+) site is built by asparagine 320 and serine 322. Residues serine 322 and 327 to 329 contribute to the UDP-N-acetyl-alpha-D-glucosamine site; that span reads SSW.

Belongs to the glycosyltransferase NleB family. Requires Mn(2+) as cofactor. In terms of processing, auto-glycosylated: arginine GlcNAcylation is required for activity toward death domain-containing host target proteins.

The protein resides in the secreted. It localises to the host cytoplasm. The catalysed reaction is L-arginyl-[protein] + UDP-N-acetyl-alpha-D-glucosamine = N(omega)-(N-acetyl-beta-D-glucosaminyl)-L-arginyl-[protein] + UDP + H(+). With respect to regulation, protein-arginine N-acetylglucosaminyltransferase activity is inhibited by 100066N compound (flavone analog) and 102644N compound (a substituted isoxazole). Its function is as follows. Protein-arginine N-acetylglucosaminyltransferase effector that disrupts TNF signaling in infected cells, including NF-kappa-B signaling, apoptosis and necroptosis. Acts by catalyzing the transfer of a single N-acetylglucosamine (GlcNAc) to a conserved arginine residue in the death domain of host proteins such as FADD: arginine GlcNAcylation prevents homotypic/heterotypic death domain interactions and assembly of the oligomeric TNF-alpha receptor complex, thereby disrupting TNF signaling. Also acts on host proteins without a death domain: catalyzes arginine GlcNAcylation of host GAPDH protein, thereby preventing GAPDH interaction with TRAF2, leading to inhibit NF-kappa-B signaling. Catalyzes auto-GlcNAcylation, which is required for activity toward death domain-containing host target proteins. In Escherichia coli O157:H7, this protein is Protein-arginine N-acetylglucosaminyltransferase NleB1.